Reading from the N-terminus, the 162-residue chain is NADH-quinone oxidoreductase subunit I (162 aa).

2 consecutive 4Fe-4S ferredoxin-type domains span residues 53-83 (LRRYPNGEERCIACKLCEAVCPALAITIEAE) and 93-122 (TRYDIDMTKCIYCGLCQEACPVDAIVEGPN). The [4Fe-4S] cluster site is built by Cys63, Cys66, Cys69, Cys73, Cys102, Cys105, Cys108, and Cys112.

It belongs to the complex I 23 kDa subunit family. As to quaternary structure, NDH-1 is composed of 14 different subunits. Subunits NuoA, H, J, K, L, M, N constitute the membrane sector of the complex. [4Fe-4S] cluster serves as cofactor.

It is found in the cell inner membrane. The enzyme catalyses a quinone + NADH + 5 H(+)(in) = a quinol + NAD(+) + 4 H(+)(out). Functionally, NDH-1 shuttles electrons from NADH, via FMN and iron-sulfur (Fe-S) centers, to quinones in the respiratory chain. The immediate electron acceptor for the enzyme in this species is believed to be ubiquinone. Couples the redox reaction to proton translocation (for every two electrons transferred, four hydrogen ions are translocated across the cytoplasmic membrane), and thus conserves the redox energy in a proton gradient. The chain is NADH-quinone oxidoreductase subunit I from Rhodospirillum centenum (strain ATCC 51521 / SW).